A 1163-amino-acid chain; its full sequence is Actin cross-linking toxin VgrG1 (1163 aa).

Positions 728-1163 (TPDFPTHFPK…NPQEWQRIIA (436 aa)) constitute an ACD domain. 739–743 (SIGIE) contacts ATP. Mg(2+) contacts are provided by glutamate 743 and glutamate 805. Position 808 (serine 808) interacts with ATP. Residue glutamine 889 coordinates Mg(2+). Arginine 995 lines the ATP pocket. Glutamate 1066 is a Mg(2+) binding site.

Belongs to the VgrG protein family. As to quaternary structure, interacts with protein VC1417. Mg(2+) serves as cofactor.

It localises to the secreted. The protein localises to the host cytoplasm. Its subcellular location is the host cytosol. Its function is as follows. Part of the type VI secretion system (T6SS) specialized secretion system, which delivers several virulence factors in both prokaryotic and eukaryotic cells during infection. Forms the spike at the tip of the elongating tube probably formed by hemolysin co-regulated protein/Hcp. Allows the delivery of the TseL antibacterial toxin to target cells where it exerts its toxicity. Also acts directly as an actin-directed toxin that catalyzes the covalent cross-linking of host cytoplasmic monomeric actin. Mediates the cross-link between 'Lys-50' of one monomer and 'Glu-270' of another actin monomer, resulting in formation of highly toxic actin oligomers that cause cell rounding. The toxin can be highly efficient at very low concentrations by acting on formin homology family proteins: toxic actin oligomers bind with high affinity to formins and adversely affect both nucleation and elongation abilities of formins, causing their potent inhibition in both profilin-dependent and independent manners. Acts as an acid--amino-acid ligase that transfers the gamma-phosphoryl group of ATP to the 'Glu-270' actin residue, resulting in the formation of an activated acyl phosphate intermediate. This intermediate is further hydrolyzed and the energy of hydrolysis is utilized for the formation of the amide bond between actin subunits. The chain is Actin cross-linking toxin VgrG1 from Vibrio cholerae serotype O1 (strain ATCC 39315 / El Tor Inaba N16961).